Reading from the N-terminus, the 343-residue chain is S-adenosylmethionine:tRNA ribosyltransferase-isomerase (343 aa).

It belongs to the QueA family. As to quaternary structure, monomer.

The protein localises to the cytoplasm. It carries out the reaction 7-aminomethyl-7-carbaguanosine(34) in tRNA + S-adenosyl-L-methionine = epoxyqueuosine(34) in tRNA + adenine + L-methionine + 2 H(+). Its pathway is tRNA modification; tRNA-queuosine biosynthesis. Transfers and isomerizes the ribose moiety from AdoMet to the 7-aminomethyl group of 7-deazaguanine (preQ1-tRNA) to give epoxyqueuosine (oQ-tRNA). The protein is S-adenosylmethionine:tRNA ribosyltransferase-isomerase of Syntrophotalea carbinolica (strain DSM 2380 / NBRC 103641 / GraBd1) (Pelobacter carbinolicus).